The sequence spans 763 residues: Xaa-Pro dipeptidyl-peptidase (763 aa).

Catalysis depends on charge relay system residues serine 348, aspartate 468, and histidine 498.

Belongs to the peptidase S15 family. Homodimer.

Its subcellular location is the cytoplasm. The catalysed reaction is Hydrolyzes Xaa-Pro-|- bonds to release unblocked, N-terminal dipeptides from substrates including Ala-Pro-|-p-nitroanilide and (sequentially) Tyr-Pro-|-Phe-Pro-|-Gly-Pro-|-Ile.. Functionally, removes N-terminal dipeptides sequentially from polypeptides having unsubstituted N-termini provided that the penultimate residue is proline. This chain is Xaa-Pro dipeptidyl-peptidase, found in Lactococcus lactis subsp. cremoris (strain SK11).